The following is an 89-amino-acid chain: MAHKKGTGSTRNGRDSNAQRLGVKRYGGEVVRAGNILVRQRGTKFHPGNNVGRGNDDTLFATIDGVVTFERYGKDRKRISVYPVAAAAS.

The interval 1–22 (MAHKKGTGSTRNGRDSNAQRLG) is disordered. The segment covering 7-19 (TGSTRNGRDSNAQ) has biased composition (polar residues).

This sequence belongs to the bacterial ribosomal protein bL27 family.

The protein is Large ribosomal subunit protein bL27 of Cyanothece sp. (strain PCC 7425 / ATCC 29141).